We begin with the raw amino-acid sequence, 113 residues long: ATP-dependent Clp protease adapter protein ClpS (113 aa).

The tract at residues 1-24 (MTAQLHMMSDKHDQDNDASVLLQT) is disordered.

The protein belongs to the ClpS family. Binds to the N-terminal domain of the chaperone ClpA.

Its function is as follows. Involved in the modulation of the specificity of the ClpAP-mediated ATP-dependent protein degradation. The protein is ATP-dependent Clp protease adapter protein ClpS of Ruegeria pomeroyi (strain ATCC 700808 / DSM 15171 / DSS-3) (Silicibacter pomeroyi).